The chain runs to 820 residues: Serine/threonine-protein phosphatase 4 regulatory subunit 3-A (820 aa).

The WH1 domain occupies 1-100; that stretch reads MSDTRRRVKV…DEIWEKICQV (100 aa). Residues 682 to 694 show a composition bias toward acidic residues; the sequence is ELWFNEDDEEEGE. Disordered regions lie at residues 682-712 and 750-820; these read ELWF…FPEG and AANG…RLGS. Residues 701-712 are compositionally biased toward basic and acidic residues; sequence EKTKPEDDFPEG. 2 stretches are compositionally biased toward polar residues: residues 750–761 and 768–790; these read AANGANSTNSKS and PATS…STKG. Residues 798–809 show a composition bias toward acidic residues; the sequence is YPDDEDEEEEED.

It belongs to the SMEK family. In terms of assembly, serine/threonine-protein phosphatase 4 (PP4) occurs in different assemblies of the catalytic and one or more regulatory subunits.

Its function is as follows. Regulatory subunit of serine/threonine-protein phosphatase 4 (PP4). The sequence is that of Serine/threonine-protein phosphatase 4 regulatory subunit 3-A from Xenopus laevis (African clawed frog).